A 166-amino-acid polypeptide reads, in one-letter code: EEF1A lysine methyltransferase 1 (166 aa).

The protein belongs to the class I-like SAM-binding methyltransferase superfamily. EFM5 family.

It is found in the cytoplasm. The enzyme catalyses L-lysyl-[protein] + 3 S-adenosyl-L-methionine = N(6),N(6),N(6)-trimethyl-L-lysyl-[protein] + 3 S-adenosyl-L-homocysteine + 3 H(+). Its function is as follows. Protein-lysine methyltransferase that selectively catalyzes the trimethylation of EEF1A at 'Lys-79'. The protein is EEF1A lysine methyltransferase 1 of Danio rerio (Zebrafish).